The chain runs to 437 residues: MSMFLDTAKISVQAGRGGDGMVAFRREKYVPNGGPWGGDGGKGGSVIFRVDEGLRTLMDFRYNRKFKAKSGEKGMTKGMHGRGAEDLIVFVPQGTTVRDAETGKVITDLVEHGQEVVIAKGGRGGRGNIRFATPRNPAPEIAENGEPGEERQLELELKILADVGLVGFPSVGKSTLLSVVSSAKPKIGAYHFTTIVPNLGMVRTKSGDSFAMADLPGLIEGASQGIGLGTQFLRHIERTRVILHVIDMSASEGRDPYEDYVSINNELETYNLRLMERPQIIVANKMDMPEAQENLKAFKKKLAAQYDEFDDLPMIFPISSLAHQGLENLLEATAELLAKTDEFLLYDEADLVDEEAYYGFAETEKDFEITRDDDATWVLSGEKLERLFVMTNMERDESIMKFARQLRGMGVDEALRERGAKDGDPVRIGKFEFEFVD.

Residues 2–160 (SMFLDTAKIS…RQLELELKIL (159 aa)) form the Obg domain. Residues 161–338 (ADVGLVGFPS…LLEATAELLA (178 aa)) form the OBG-type G domain. GTP is bound by residues 167-174 (GFPSVGKS), 192-196 (FTTIV), 214-217 (DLPG), 284-287 (NKMD), and 319-321 (SSL). Mg(2+) contacts are provided by serine 174 and threonine 194. The OCT domain occupies 359 to 437 (GFAETEKDFE…IGKFEFEFVD (79 aa)).

It belongs to the TRAFAC class OBG-HflX-like GTPase superfamily. OBG GTPase family. As to quaternary structure, monomer. It depends on Mg(2+) as a cofactor.

The protein localises to the cytoplasm. An essential GTPase which binds GTP, GDP and possibly (p)ppGpp with moderate affinity, with high nucleotide exchange rates and a fairly low GTP hydrolysis rate. Plays a role in control of the cell cycle, stress response, ribosome biogenesis and in those bacteria that undergo differentiation, in morphogenesis control. The polypeptide is GTPase Obg (Streptococcus pyogenes serotype M5 (strain Manfredo)).